The primary structure comprises 549 residues: Cation/acetate symporter ActP (549 aa).

The next 13 helical transmembrane spans lie at 32-54 (IQAI…WASK), 75-97 (GMAI…LVYT), 102-124 (GLIY…AERL), 145-167 (IRIL…QMVG), 182-204 (VAVV…LATT), 211-233 (AILL…NFNF), 263-285 (ALSL…MRFF), 298-320 (FYAT…GAIL), 361-383 (AVAF…SAVS), 404-423 (VSKI…GILF), 428-450 (IAFM…ILLS), 462-484 (LVGG…TIWV), and 494-516 (YPYE…LFSI).

It belongs to the sodium:solute symporter (SSF) (TC 2.A.21) family.

The protein localises to the cell inner membrane. In terms of biological role, transports acetate. This chain is Cation/acetate symporter ActP, found in Photorhabdus laumondii subsp. laumondii (strain DSM 15139 / CIP 105565 / TT01) (Photorhabdus luminescens subsp. laumondii).